The chain runs to 318 residues: Ribosomal RNA small subunit methyltransferase H (318 aa).

S-adenosyl-L-methionine is bound by residues 42–44, D62, F86, D108, and Q115; that span reads GGH.

It belongs to the methyltransferase superfamily. RsmH family.

It is found in the cytoplasm. It carries out the reaction cytidine(1402) in 16S rRNA + S-adenosyl-L-methionine = N(4)-methylcytidine(1402) in 16S rRNA + S-adenosyl-L-homocysteine + H(+). In terms of biological role, specifically methylates the N4 position of cytidine in position 1402 (C1402) of 16S rRNA. The chain is Ribosomal RNA small subunit methyltransferase H from Yersinia pestis (strain Pestoides F).